The sequence spans 506 residues: Protein EFFECTOR OF TRANSCRIPTION 1 (506 aa).

The GIY-YIG domain maps to 185 to 225 (AFQGLYELSHDHGRKDDVLVANLGQPESIRSRLRSYSRSFA). Polar residues predominate over residues 234–247 (LSQTILPTTQNKSD). The interval 234-298 (LSQTILPTTQ…VSEKHDDIVD (65 aa)) is disordered. The segment covering 248–272 (NQTEEKKSDSEEEREVSSDAAEKES) has biased composition (basic and acidic residues). Over residues 273–288 (NSLPSILRLSRSRPQP) the composition is skewed to low complexity. Cx9Cx9RCx2HK repeat units lie at residues 306 to 331 (CGVL…TEHK) and 361 to 386 (CGVI…EDHK). A compositionally biased stretch (basic and acidic residues) spans 404 to 413 (KAVNEDKSKP). Positions 404–426 (KAVNEDKSKPETSTGMNQEGSGL) are disordered. A compositionally biased stretch (polar residues) spans 414-423 (ETSTGMNQEG). 2 Cx9Cx9RCx2HK repeats span residues 428 to 453 (CEAT…WQHK) and 475 to 500 (CGFK…EEHK).

As to expression, expressed in rosette leaves, stipules, stems, flowers, siliques and mature seeds. Expressed in the vascular bundles of xylem in shoot parenchyma cells. Expressed in the remnant cytoplasm of differentiated fiber cells and in protoxylem element of parenchymal cells.

The protein localises to the cytoplasm. It is found in the nucleus. Transcriptional regulator involved in the regulation of cell differentiation in meristems. Binds DNA without sequence preference. This Arabidopsis thaliana (Mouse-ear cress) protein is Protein EFFECTOR OF TRANSCRIPTION 1.